Reading from the N-terminus, the 209-residue chain is Nucleoside triphosphate pyrophosphatase (209 aa).

Asp79 (proton acceptor) is an active-site residue.

This sequence belongs to the Maf family. Requires a divalent metal cation as cofactor.

The protein resides in the cytoplasm. The catalysed reaction is a ribonucleoside 5'-triphosphate + H2O = a ribonucleoside 5'-phosphate + diphosphate + H(+). It carries out the reaction a 2'-deoxyribonucleoside 5'-triphosphate + H2O = a 2'-deoxyribonucleoside 5'-phosphate + diphosphate + H(+). Nucleoside triphosphate pyrophosphatase. May have a dual role in cell division arrest and in preventing the incorporation of modified nucleotides into cellular nucleic acids. This chain is Nucleoside triphosphate pyrophosphatase, found in Mycolicibacterium vanbaalenii (strain DSM 7251 / JCM 13017 / BCRC 16820 / KCTC 9966 / NRRL B-24157 / PYR-1) (Mycobacterium vanbaalenii).